The chain runs to 624 residues: ATP-dependent zinc metalloprotease FtsH (624 aa).

Residues 1 to 7 (MPRAPFS) lie on the Cytoplasmic side of the membrane. A helical membrane pass occupies residues 8–28 (LLALVLGLAFLAWAFSLAGTV). The Periplasmic segment spans residues 29-103 (GAPSGTVNYT…VRVEPPQGQN (75 aa)). A helical membrane pass occupies residues 104–124 (ALGFLWPLLLVGLLIGALYYF). At 125-624 (SRNGRAGPSD…VKPGGALGGA (500 aa)) the chain is on the cytoplasmic side. ATP-binding positions include Ala-159, 199 to 203 (GVGKT), and His-204. His-418 is a binding site for Zn(2+). Glu-419 is an active-site residue. Zn(2+) contacts are provided by His-422 and Asp-493. The interval 595–624 (PLEAPEEAREEREPPRVVPKVKPGGALGGA) is disordered. Over residues 600-609 (EEAREEREPP) the composition is skewed to basic and acidic residues.

This sequence in the central section; belongs to the AAA ATPase family. In the C-terminal section; belongs to the peptidase M41 family. In terms of assembly, the isolated soluble domain (residues 126-624) forms a stable hexamer in which the AAA+ domains (residues 126-400) are alternatively open or closed. Zn(2+) is required as a cofactor.

It is found in the cell inner membrane. With respect to regulation, the proteolytic activity is dependent on ATP, both the ATPase and protease activities are inhibited by ADP. Its function is as follows. Acts as a processive, ATP-dependent zinc metallopeptidase for both cytoplasmic and membrane proteins. Plays a role in the quality control of integral membrane proteins. Degrades preferentially unfolded substrates in a processive, ATP-dependent manner, usually after hydrophobic residues. In Thermus thermophilus (strain ATCC 27634 / DSM 579 / HB8), this protein is ATP-dependent zinc metalloprotease FtsH.